A 145-amino-acid chain; its full sequence is 3-dehydroquinate dehydratase (145 aa).

Catalysis depends on tyrosine 24, which acts as the Proton acceptor. Substrate is bound by residues asparagine 76, histidine 82, and aspartate 89. Histidine 102 functions as the Proton donor in the catalytic mechanism. Substrate contacts are provided by residues 103–104 (VS) and arginine 113.

The protein belongs to the type-II 3-dehydroquinase family. As to quaternary structure, homododecamer.

It carries out the reaction 3-dehydroquinate = 3-dehydroshikimate + H2O. It functions in the pathway metabolic intermediate biosynthesis; chorismate biosynthesis; chorismate from D-erythrose 4-phosphate and phosphoenolpyruvate: step 3/7. Its function is as follows. Catalyzes a trans-dehydration via an enolate intermediate. In Herminiimonas arsenicoxydans, this protein is 3-dehydroquinate dehydratase.